The primary structure comprises 162 residues: Urease accessory protein UreE 1 (162 aa).

Residues 143–162 (SGGHQHHHGHDHDHHHPDHE) form a disordered region. The span at 152–162 (HDHDHHHPDHE) shows a compositional bias: basic and acidic residues.

Belongs to the UreE family.

Its subcellular location is the cytoplasm. In terms of biological role, involved in urease metallocenter assembly. Binds nickel. Probably functions as a nickel donor during metallocenter assembly. The polypeptide is Urease accessory protein UreE 1 (Brucella suis biovar 1 (strain 1330)).